A 355-amino-acid chain; its full sequence is 45 kDa calcium-binding protein (355 aa).

The first 29 residues, 1-29 (MASRQGPLCGLAPCCLWLLGVILLMNASA), serve as a signal peptide directing secretion. N-linked (GlcNAc...) asparagine glycosylation is present at asparagine 26. EF-hand domains lie at 91-126 (KSRR…KTAE) and 130-165 (EAVA…TKGH). The residue at position 92 (serine 92) is a Phosphoserine. Ca(2+) contacts are provided by aspartate 104, asparagine 106, aspartate 108, arginine 110, glutamate 115, aspartate 143, aspartate 145, aspartate 147, histidine 149, and glutamate 154. A phosphothreonine mark is found at threonine 186 and threonine 210. EF-hand domains follow at residues 226–261 (MLQF…TVEN), 271–306 (WVRD…MNEF), and 307–342 (SALN…FTGS). Ca(2+) is bound by residues aspartate 239, aspartate 241, aspartate 243, lysine 245, and glutamate 250. A Phosphothreonine modification is found at threonine 258. Positions 284, 286, and 288 each coordinate Ca(2+). Residue threonine 292 is modified to Phosphothreonine. Ca(2+) contacts are provided by glutamate 295, aspartate 320, asparagine 322, asparagine 324, tyrosine 326, and glutamate 331. The segment at 302–355 (PMNEFSALNEAKQMIAIADENQNHYLEPEEVLKYSEFFTGSKLVDYARSVHEEF) is necessary for intracellular retention in Golgi apparatus lumen.

The protein belongs to the CREC family.

The protein localises to the golgi apparatus lumen. Its function is as follows. May regulate calcium-dependent activities in the endoplasmic reticulum lumen or post-ER compartment. The protein is 45 kDa calcium-binding protein (SDF4) of Capra hircus (Goat).